A 185-amino-acid chain; its full sequence is Ribosome-recycling factor (185 aa).

The tract at residues 143–163 (RKDGEAGEDEVARAEKDLDKS) is disordered.

The protein belongs to the RRF family.

Its subcellular location is the cytoplasm. In terms of biological role, responsible for the release of ribosomes from messenger RNA at the termination of protein biosynthesis. May increase the efficiency of translation by recycling ribosomes from one round of translation to another. The sequence is that of Ribosome-recycling factor from Mycobacterium marinum (strain ATCC BAA-535 / M).